The primary structure comprises 548 residues: Probable 2,3-bisphosphoglycerate-independent phosphoglycerate mutase (548 aa).

Mn(2+)-binding residues include Asp-20 and Ser-73. Ser-73 (phosphoserine intermediate) is an active-site residue. Residues His-134, 164–165 (RD), Arg-200, Arg-207, 279–282 (RGDR), and Lys-354 each bind substrate. Positions 422, 426, 463, 464, and 493 each coordinate Mn(2+).

Belongs to the BPG-independent phosphoglycerate mutase family. Monomer. It depends on Mn(2+) as a cofactor.

The catalysed reaction is (2R)-2-phosphoglycerate = (2R)-3-phosphoglycerate. The protein operates within carbohydrate degradation; glycolysis; pyruvate from D-glyceraldehyde 3-phosphate: step 3/5. Catalyzes the interconversion of 2-phosphoglycerate and 3-phosphoglycerate. The sequence is that of Probable 2,3-bisphosphoglycerate-independent phosphoglycerate mutase (gpmI) from Leptospira interrogans serogroup Icterohaemorrhagiae serovar copenhageni (strain Fiocruz L1-130).